Reading from the N-terminus, the 245-residue chain is uncharacterized protein (245 aa).

The signal sequence occupies residues 1–18 (MKSAAILALLAQALAVTA). Residues 21 to 66 (VEGDRTPGTRTLDLPNFPGGSVPTRGVEKRADLPPDNGGGNAPDPD) form a disordered region. Residues Asn189 and Asn225 are each glycosylated (N-linked (GlcNAc...) asparagine).

It localises to the secreted. This is an uncharacterized protein from Arthroderma benhamiae (strain ATCC MYA-4681 / CBS 112371) (Trichophyton mentagrophytes).